We begin with the raw amino-acid sequence, 447 residues long: MQKSQKIAIVGSGLVGSLLAIYLKKEGHTVHVYDRSPDIRTIQFSGRSINLAMSNRGWNALDGAGVGDKVRHIAIAMEKRAIHIGNQLNFQHYGLQGECIYSISRGVLNRKMIDLAEEAGAEFFFEQKIWDVNLTDATLQMGETERGEWTNVSYDMVFGADGAFSRIRHRMQRQSMFNYSQDFLNTGYKELHIPANPDGSYKLDKHSLHIWPRGKYMLIALPNLDGSFTCTLFMPFEGENSFASLDNRQKVEAFFAENLPDTVDVIPDLAEDFFKNPTSTLVTMKCFPWTYSDKVALIGDAAHAIVPFYGQGMNAGFEDITILYQMMQEYGNDWKTIFSEYEKSRKPDADAIAELSYRNFMEMSTKTANEKFLLQKKIERWFASKYPEKWIPLYDRVTFSTRPYSEALAIGDFQETIMQEILKIENIETNWETEEIEHKIIQLLNSK.

This sequence belongs to the aromatic-ring hydroxylase family. KMO subfamily. It depends on FAD as a cofactor.

The catalysed reaction is L-kynurenine + NADPH + O2 + H(+) = 3-hydroxy-L-kynurenine + NADP(+) + H2O. Its pathway is cofactor biosynthesis; NAD(+) biosynthesis; quinolinate from L-kynurenine: step 1/3. Its function is as follows. Catalyzes the hydroxylation of L-kynurenine (L-Kyn) to form 3-hydroxy-L-kynurenine (L-3OHKyn). Required for synthesis of quinolinic acid. The chain is Kynurenine 3-monooxygenase from Flavobacterium psychrophilum (strain ATCC 49511 / DSM 21280 / CIP 103535 / JIP02/86).